Reading from the N-terminus, the 244-residue chain is Protein crossbronx (244 aa).

The region spanning 20–176 (QQEYKILAEY…VQKNIKESKE (157 aa)) is the UBC core domain. The tract at residues 209 to 244 (AGRSKQTEPSAQQANGGHATGLSWVKEGEFKPLSIE) is disordered.

It belongs to the ubiquitin-conjugating enzyme family. FTS subfamily.

This chain is Protein crossbronx (cbx), found in Drosophila erecta (Fruit fly).